We begin with the raw amino-acid sequence, 434 residues long: RHOMBOID-like protein 9, chloroplastic (434 aa).

The N-terminal 68 residues, 1-68 (MALFPLHHEV…SPRRRLCLVR (68 aa)), are a transit peptide targeting the chloroplast. The next 8 membrane-spanning stretches (helical) occupy residues 182–202 (FYAV…EAAA), 209–229 (MGLL…ILAG), 238–258 (MFLH…LTFG), 267–287 (LFTF…MSFL), 289–309 (TADP…AWLV), 326–346 (LFQK…FGPI), 352–372 (LGAL…LQLG), and 399–419 (FLLF…IGDG).

It belongs to the peptidase S54 family.

Its subcellular location is the plastid. The protein localises to the chloroplast membrane. In terms of biological role, probable rhomboid-type serine protease that catalyzes intramembrane proteolysis. This Arabidopsis thaliana (Mouse-ear cress) protein is RHOMBOID-like protein 9, chloroplastic.